The sequence spans 142 residues: Coiled-coil-helix-coiled-coil-helix domain-containing protein 10, mitochondrial (142 aa).

Residues 1–16 constitute a mitochondrion transit peptide; sequence MPRGSRSAASRPASRP. Over residues 1 to 20 the composition is skewed to low complexity; that stretch reads MPRGSRSAASRPASRPAAPS. 2 disordered regions span residues 1–45 and 68–97; these read MPRG…PGLM and ALTG…PQPL. Over residues 21–39 the composition is skewed to pro residues; that stretch reads AHPPAHPPPSAAAPAPAPS. Over residues 80 to 90 the composition is skewed to low complexity; the sequence is PSQPAVQQAPT. A CHCH domain is found at 99–140; that stretch reads MGPCAYEIRQFLDCSTTQSDLSLCEGFSEALKQCKYYHGLSS. 2 short sequence motifs (cx9C motif) span residues 102 to 112 and 122 to 132; these read CAYEIRQFLDC and CEGFSEALKQC. Cystine bridges form between Cys-102/Cys-132 and Cys-112/Cys-122.

As to expression, ubiquitously expressed. Higher expression is observed in heart and liver.

It is found in the mitochondrion intermembrane space. May be involved in the maintenance of mitochondrial organization and mitochondrial cristae structure. This is Coiled-coil-helix-coiled-coil-helix domain-containing protein 10, mitochondrial (CHCHD10) from Homo sapiens (Human).